Here is a 516-residue protein sequence, read N- to C-terminus: Putative sel1-like repeat-containing protein R850 (516 aa).

Sel1-like repeat units follow at residues 103–138 (ALTY…NMNS) and 230–265 (SISQ…KQGD).

The polypeptide is Putative sel1-like repeat-containing protein R850 (Acanthamoeba polyphaga (Amoeba)).